The primary structure comprises 341 residues: Methionine import ATP-binding protein MetN 2 (341 aa).

In terms of domain architecture, ABC transporter spans 2-241; that stretch reads INLQNVSKIY…PKEEMTKRFV (240 aa). 38–45 lines the ATP pocket; it reads GYSGAGKS.

It belongs to the ABC transporter superfamily. Methionine importer (TC 3.A.1.24) family. As to quaternary structure, the complex is composed of two ATP-binding proteins (MetN), two transmembrane proteins (MetI) and a solute-binding protein (MetQ).

Its subcellular location is the cell membrane. The enzyme catalyses L-methionine(out) + ATP + H2O = L-methionine(in) + ADP + phosphate + H(+). It carries out the reaction D-methionine(out) + ATP + H2O = D-methionine(in) + ADP + phosphate + H(+). Its function is as follows. Part of the ABC transporter complex MetNIQ involved in methionine import. Responsible for energy coupling to the transport system. In Bacillus licheniformis (strain ATCC 14580 / DSM 13 / JCM 2505 / CCUG 7422 / NBRC 12200 / NCIMB 9375 / NCTC 10341 / NRRL NRS-1264 / Gibson 46), this protein is Methionine import ATP-binding protein MetN 2.